The sequence spans 235 residues: Exotoxin type C (235 aa).

The first 27 residues, 1-27 (MKKINIIKIVFIITVILISTISPIIKS), serve as a signal peptide directing secretion. His-194, His-228, and Asp-230 together coordinate Zn(2+).

The protein belongs to the staphylococcal/streptococcal toxin family.

Superantigen that acts as a causative agent of the symptoms associated with scarlet fever. Has been associated with streptococcal toxic shock-like disease and may play a role in the early events of rheumatic fever. Superantigens cross-link major histocompatibility complex (MHC) class II and T-cell receptor (TCR) molecules, resulting in an overstimulation of T-cells associated with a massive release of pyrogenic and inflammatory cytokines. In Streptococcus pyogenes serotype M18 (strain MGAS8232), this protein is Exotoxin type C.